The sequence spans 596 residues: Trehalase (596 aa).

A signal peptide spans 1 to 23; sequence MFKLPTISLLLVSWSCLVALSQA. Residues Arg193, 200–201, Asn237, and 246–248 contribute to the substrate site; these read WD and RSQ. Asn288 and Asn293 each carry an N-linked (GlcNAc...) asparagine glycan. The disordered stretch occupies residues 303–323; it reads SSGPRPESYREDVETGEEFPT. Substrate-binding positions include 307–309 and Gly341; that span reads RPE. Asp343 functions as the Proton donor/acceptor in the catalytic mechanism. 3 N-linked (GlcNAc...) asparagine glycosylation sites follow: Asn359, Asn451, and Asn516. Glu541 serves as the catalytic Proton donor/acceptor. Glu556 is a substrate binding site.

The protein belongs to the glycosyl hydrolase 37 family. As to expression, in the adult brain predominantly expressed in glial cells (at protein level).

It carries out the reaction alpha,alpha-trehalose + H2O = alpha-D-glucose + beta-D-glucose. In terms of biological role, enzyme that cleaves trehalose to produce 2 glucose molecules that can be used by the glycolytic pathway. Glycolysis is essential in glial cells but not in neurons; neurons rely on the citric acid cycle for their energy needs, and on lactate and alanine secreted into the hemolymph by glial cells to fuel it. This chain is Trehalase, found in Drosophila melanogaster (Fruit fly).